The following is a 783-amino-acid chain: Protein phosphatase 2C 29 (783 aa).

The interval 151 to 194 (SFSALPLQPGPDRSGLFMSGPIERGATSGPLDPPAGEISRSNSA) is disordered. At S199 the chain carries Phosphoserine. Positions 260 to 770 (SSGENDLQWA…DDCTVLVIAL (511 aa)) constitute a PPM-type phosphatase domain. The Mn(2+) site is built by D295 and G296. Residues 555-595 (ETGESVETAERVEERRNDLDRDDGNKEPLVVDSSDSTVNNE) are disordered. The span at 562-580 (TAERVEERRNDLDRDDGNK) shows a compositional bias: basic and acidic residues. D701 and D761 together coordinate Mn(2+).

Belongs to the PP2C family. Requires Mg(2+) as cofactor. The cofactor is Mn(2+). In terms of tissue distribution, expressed in roots, leaves, stems, inflorescences, flowers and developing vascular tissue.

Its subcellular location is the nucleus. It catalyses the reaction O-phospho-L-seryl-[protein] + H2O = L-seryl-[protein] + phosphate. It carries out the reaction O-phospho-L-threonyl-[protein] + H2O = L-threonyl-[protein] + phosphate. Its function is as follows. Involved in the regulation of pedicel length and of CLAVATA pathways controlling stem cell identity at shoot and flower meristems. This chain is Protein phosphatase 2C 29 (PLL1), found in Arabidopsis thaliana (Mouse-ear cress).